Reading from the N-terminus, the 479-residue chain is Glycogen synthase (479 aa).

Position 16 (Lys-16) interacts with ADP-alpha-D-glucose.

The protein belongs to the glycosyltransferase 1 family. Bacterial/plant glycogen synthase subfamily.

The enzyme catalyses [(1-&gt;4)-alpha-D-glucosyl](n) + ADP-alpha-D-glucose = [(1-&gt;4)-alpha-D-glucosyl](n+1) + ADP + H(+). It participates in glycan biosynthesis; glycogen biosynthesis. Synthesizes alpha-1,4-glucan chains using ADP-glucose. This Lactiplantibacillus plantarum (strain ATCC BAA-793 / NCIMB 8826 / WCFS1) (Lactobacillus plantarum) protein is Glycogen synthase.